A 569-amino-acid polypeptide reads, in one-letter code: Protein angel homolog 2 (569 aa).

Disordered regions lie at residues 1–22, 63–92, and 109–155; these read MRKGRHMPRHTNANYARPGVSP, LQHPSSSFSTVRHPFNRPPRPPDPYQWSSW, and GLME…WLRN. Residues 63–72 show a composition bias toward polar residues; the sequence is LQHPSSSFST. The span at 139–150 shows a compositional bias: low complexity; that stretch reads PPKGSRSPKGSP.

It belongs to the CCR4/nocturin family.

The polypeptide is Protein angel homolog 2 (angel2) (Danio rerio (Zebrafish)).